Reading from the N-terminus, the 355-residue chain is 3'-5' exonuclease (355 aa).

The tract at residues 1–121 is disordered; the sequence is MDKYLIKLPN…PSPEKEKPEK (121 aa). Composition is skewed to basic and acidic residues over residues 17–29, 36–50, and 72–92; these read VSDKKEVVKKETP, AKKDTPKQEKEKENT, and KNLDTPEVTQEKESVESENPP. Phosphoserine occurs at positions 105 and 113. The 3'-5' exonuclease domain occupies 147–315; that stretch reads VMQWVEKQKE…GQVIYRDLEQ (169 aa). Mg(2+) contacts are provided by aspartate 164, glutamate 166, and aspartate 302.

This sequence belongs to the WRNexo family.

Its subcellular location is the nucleus. Has exonuclease activity on both single-stranded and duplex templates bearing overhangs, but not blunt ended duplex DNA, and cleaves in a 3'-5' direction. Essential for the formation of DNA replication focal centers. Has an important role in maintaining genome stability. The chain is 3'-5' exonuclease from Drosophila ananassae (Fruit fly).